The sequence spans 54 residues: Photosystem II reaction center protein K (54 aa).

Residues 1–17 (MLLEHVTITLLNNTSFA) constitute a propeptide that is removed on maturation. The helical transmembrane segment at 29-49 (LIDVLPIIPLLFLLLAFVWQA) threads the bilayer.

The protein belongs to the PsbK family. PSII is composed of 1 copy each of membrane proteins PsbA, PsbB, PsbC, PsbD, PsbE, PsbF, PsbH, PsbI, PsbJ, PsbK, PsbL, PsbM, PsbT, PsbY, PsbZ, Psb30/Ycf12, at least 3 peripheral proteins of the oxygen-evolving complex and a large number of cofactors. It forms dimeric complexes.

The protein resides in the plastid. Its subcellular location is the chloroplast thylakoid membrane. In terms of biological role, one of the components of the core complex of photosystem II (PSII). PSII is a light-driven water:plastoquinone oxidoreductase that uses light energy to abstract electrons from H(2)O, generating O(2) and a proton gradient subsequently used for ATP formation. It consists of a core antenna complex that captures photons, and an electron transfer chain that converts photonic excitation into a charge separation. This is Photosystem II reaction center protein K from Euglena mutabilis.